We begin with the raw amino-acid sequence, 59 residues long: uncharacterized protein (59 aa).

The chain crosses the membrane as a helical span at residues 6–26; sequence WWLVVFAVFVFLFDTLLMQWI.

It is found in the membrane. This is an uncharacterized protein from Escherichia coli O157:H7.